The sequence spans 261 residues: Enolase-phosphatase E1 (261 aa).

Residues D16 and E18 each contribute to the Mg(2+) site. Residues 153-154 (SS) and K187 contribute to the substrate site. D212 serves as a coordination point for Mg(2+).

The protein belongs to the HAD-like hydrolase superfamily. MasA/MtnC family. Monomer. It depends on Mg(2+) as a cofactor.

Its subcellular location is the cytoplasm. It localises to the nucleus. The catalysed reaction is 5-methylsulfanyl-2,3-dioxopentyl phosphate + H2O = 1,2-dihydroxy-5-(methylsulfanyl)pent-1-en-3-one + phosphate. It participates in amino-acid biosynthesis; L-methionine biosynthesis via salvage pathway; L-methionine from S-methyl-5-thio-alpha-D-ribose 1-phosphate: step 3/6. Its pathway is amino-acid biosynthesis; L-methionine biosynthesis via salvage pathway; L-methionine from S-methyl-5-thio-alpha-D-ribose 1-phosphate: step 4/6. In terms of biological role, bifunctional enzyme that catalyzes the enolization of 2,3-diketo-5-methylthiopentyl-1-phosphate (DK-MTP-1-P) into the intermediate 2-hydroxy-3-keto-5-methylthiopentenyl-1-phosphate (HK-MTPenyl-1-P), which is then dephosphorylated to form the acireductone 1,2-dihydroxy-3-keto-5-methylthiopentene (DHK-MTPene). This is Enolase-phosphatase E1 (enoph1) from Salmo salar (Atlantic salmon).